Consider the following 399-residue polypeptide: Leu/Ile/Val-binding protein homolog 7 (399 aa).

An N-terminal signal peptide occupies residues 1–22 (MEKHLIALSVAALQAGAAPASA).

This sequence belongs to the leucine-binding protein family.

Component of an amino-acid transport system. This is Leu/Ile/Val-binding protein homolog 7 from Brucella abortus (strain 2308).